Here is a 36-residue protein sequence, read N- to C-terminus: Photosystem I reaction center subunit VIII (36 aa).

A helical transmembrane segment spans residues 9–29 (ILTPVVTLVFPGLMFALFFVL).

This sequence belongs to the PsaI family.

Its subcellular location is the plastid. It is found in the chloroplast thylakoid membrane. Its function is as follows. May help in the organization of the PsaL subunit. The sequence is that of Photosystem I reaction center subunit VIII from Emiliania huxleyi (Coccolithophore).